Reading from the N-terminus, the 1074-residue chain is Semaphorin-5A (1074 aa).

An N-terminal signal peptide occupies residues 1–22 (MKGTCVIAWLFSSLGLWRLAHP). Over 23-968 (EAQGTTQCQR…EEKRCGEFNM (946 aa)) the chain is Extracellular. The region spanning 35 to 484 (HPVISYKEIG…LREHVVKIPL (450 aa)) is the Sema domain. Cystine bridges form between C104/C114 and C131/C140. N142, N168, N227, and N277 each carry an N-linked (GlcNAc...) asparagine glycan. 2 cysteine pairs are disulfide-bonded: C254/C357 and C278/C320. N-linked (GlcNAc...) asparagine glycosylation is found at N323, N367, and N437. 2 disulfide bridges follow: C487-C504 and C496-C513. N-linked (GlcNAc...) asparagine glycosylation is found at N536 and N591. 7 TSP type-1 domains span residues 540–593 (DGHF…ANCS), 595–651 (NGGW…LLCP), 653–702 (HMFW…NPCP), 707–765 (TTPW…GCST), 784–839 (NGAW…LPCP), 841–896 (DGVW…QPCP), and 897–944 (ESWS…VFDS). Disulfide bonds link C607–C644, C611–C650, C622–C634, C665–C696, C669–C701, and C680–C686. Residue N717 is glycosylated (N-linked (GlcNAc...) asparagine). Intrachain disulfides connect C796–C833, C800–C838, C811–C823, C853–C890, C857–C895, and C868–C880. An N-linked (GlcNAc...) asparagine glycan is attached at N933. The chain crosses the membrane as a helical span at residues 969–989 (FHMIAVGLSSSILGCLLTLLV). At 990–1074 (YTYCQRYQQQ…FTDLNNYDEY (85 aa)) the chain is on the cytoplasmic side.

Belongs to the semaphorin family. As to quaternary structure, binds PLXNB3.

The protein resides in the membrane. Bifunctional axonal guidance cue regulated by sulfated proteoglycans; attractive effects result from interactions with heparan sulfate proteoglycans (HSPGs), while the inhibitory effects depend on interactions with chondroitin sulfate proteoglycans (CSPGs). Ligand for receptor PLXNB3. In glioma cells, SEMA5A stimulation of PLXNB3 results in the disassembly of F-actin stress fibers, disruption of focal adhesions and cellular collapse as well as inhibition of cell migration and invasion through ARHGDIA-mediated inactivation of RAC1. May promote angiogenesis by increasing endothelial cell proliferation and migration and inhibiting apoptosis. In Homo sapiens (Human), this protein is Semaphorin-5A (SEMA5A).